The chain runs to 639 residues: Chaperone protein DnaK (639 aa).

A Phosphothreonine; by autocatalysis modification is found at threonine 198. A disordered region spans residues 604–639 (KSQAQGGDNADAGKQANAAADDVVDAEFEEVKDDKK). The segment covering 606-624 (QAQGGDNADAGKQANAAAD) has biased composition (low complexity). Residues 625 to 639 (DVVDAEFEEVKDDKK) are compositionally biased toward acidic residues.

Belongs to the heat shock protein 70 family.

In terms of biological role, acts as a chaperone. The protein is Chaperone protein DnaK of Shewanella baltica (strain OS223).